We begin with the raw amino-acid sequence, 390 residues long: Multidrug export protein EmrA (390 aa).

At 1–24 (MSANAETQTPQQPVKKSGKRKRLL) the chain is on the cytoplasmic side. A helical membrane pass occupies residues 25 to 45 (LLLTLLFIIIAVAIGIYWFLV). At 46-390 (LRHFEETDDA…IDDIVKANAG (345 aa)) the chain is on the periplasmic side. A coiled-coil region spans residues 120–180 (INSKQLQANI…QAQLDVAIQQ (61 aa)).

Belongs to the membrane fusion protein (MFP) (TC 8.A.1) family. As to quaternary structure, homodimer and homotrimer. Part of the tripartite efflux system EmrAB-TolC, which is composed of an inner membrane transporter, EmrB, a periplasmic membrane fusion protein, EmrA, and an outer membrane component, TolC. The complex forms a large protein conduit and can translocate molecules across both the inner and outer membranes. Interacts with EmrB. EmrAB complex forms a dimer in vitro.

The protein resides in the cell inner membrane. In terms of biological role, part of the tripartite efflux system EmrAB-TolC, which confers resistance to antibiotics such as CCCP, FCCP, 2,4-dinitrophenol and nalidixic acid. EmrA is a drug-binding protein that provides a physical link between EmrB and TolC. This is Multidrug export protein EmrA (emrA) from Escherichia coli (strain K12).